The following is a 1719-amino-acid chain: 5'-3' exoribonuclease 1 (1719 aa).

Over residues 1268-1298 (HKSGFTDHSVRHQQRKHDSQRKFKEEYKSPK) the composition is skewed to basic and acidic residues. The interval 1268–1317 (HKSGFTDHSVRHQQRKHDSQRKFKEEYKSPKAECQSQKLSSKQTSGGSAR) is disordered. The span at 1301 to 1314 (CQSQKLSSKQTSGG) shows a compositional bias: polar residues. The residue at position 1382 (S1382) is a Phosphoserine. Over residues 1397–1430 (ILKIDSPDTRDSKNDMKKSDNEATVSSRRDERGV) the composition is skewed to basic and acidic residues. Disordered stretches follow at residues 1397–1445 (ILKI…KPHG) and 1634–1719 (ENKE…KPSE). Positions 1638–1660 (AQSSQATPLQTNKPGSSEATKMT) are enriched in polar residues. A compositionally biased stretch (low complexity) spans 1661–1680 (PQESPPASSSSSQAAQPVSS). Residues 1681 to 1690 (HVETASQGHV) are compositionally biased toward polar residues.

This sequence belongs to the 5'-3' exonuclease family. Found in a mRNP complex with UPF1, UPF2, UPF3B and XRN1. Associates with alpha and beta tubulins. Interacts with DIS3L2. Interacts with ZC3HAV1 in an RNA-dependent manner. Interacts with ZFP36L1. Interacts with TRIM71 (via NHL repeats) in an RNA-dependent manner. Interacts with YTHDC2 (via ANK repeats). Interacts with DHX34; the interaction is RNA-independent. Expressed in heart, brain (spinal cord, dorsal root and superior cervical ganglia, neurons of the cerebrum and brain stem), peripheral nerve fibers in the skin and intestine, spleen, lung, liver, skeletal muscle, kidney and testis.

The protein localises to the cytoplasm. Major 5'-3' exoribonuclease involved in mRNA decay. Required for the 5'-3'-processing of the G4 tetraplex-containing DNA and RNA substrates. The kinetic of hydrolysis is faster for G4 RNA tetraplex than for G4 DNA tetraplex and monomeric RNA tetraplex. Binds to RNA and DNA. Plays a role in replication-dependent histone mRNA degradation. In Mus musculus (Mouse), this protein is 5'-3' exoribonuclease 1.